The chain runs to 383 residues: Vesicle-associated membrane protein-associated protein scs2 (383 aa).

In terms of domain architecture, MSP spans 1-123; sequence MSVECSGELF…SIFDRKIRCV (123 aa). At 1 to 362 the chain is on the cytoplasmic side; the sequence is MSVECSGELF…TGASLTESPG (362 aa). Polar residues predominate over residues 127–146; that stretch reads KQPPQSADKQVENTSTSNPP. Disordered stretches follow at residues 127–160 and 233–359; these read KQPPQSADKQVENTSTSNPPVSVEGSENLASSVG and ESAS…SLTE. Phosphoserine is present on residues Ser-236, Ser-237, Ser-259, Ser-261, and Ser-268. Positions 241–263 are enriched in basic and acidic residues; that stretch reads DVARSKVQDIIDNEIPKPSESPR. Residues 289 to 300 show a composition bias toward basic and acidic residues; it reads FDTKKNDFDSKL. Over residues 347–359 the composition is skewed to polar residues; the sequence is ADPSSSTGASLTE. Residues 363–383 traverse the membrane as a helical; Anchor for type IV membrane protein segment; sequence IPPNIVIILCLIFFLIGYLFF.

Belongs to the VAMP-associated protein (VAP) (TC 9.B.17) family. Interacts (via MSP domain) with duc1 (via FFAT-motif); the interaction is direct and serves to restrict the localization of duc1 to areas of cell membrane-endoplasmic reticulum contact sites, and away from the cell division site. Interacts with epr1.

Its subcellular location is the endoplasmic reticulum membrane. Vesicle-associated membrane protein-associated protein (VAP) implicated in maintaining the cortical endoplasmic reticulum (ER)-plasma membrane (PM) attachment. ER-PM contacts function to modulate the distribution of contractile ring components to ensure robust ring assembly. ER-PM contacts function also in controlling exocytosis and maintenance of cell polarity regulating cell shape. VAPs play an important role in regulating eisosome assembly. VAPs also contribute to ER-phagy by tethering atg8 to the ER membrane, but also by maintaining the ER-plasma membrane contact. Restricts the localization of duc1 away from the site of cell division. The sequence is that of Vesicle-associated membrane protein-associated protein scs2 (scs2) from Schizosaccharomyces pombe (strain 972 / ATCC 24843) (Fission yeast).